Consider the following 648-residue polypeptide: Threonine--tRNA ligase (648 aa).

Positions 1 to 61 constitute a TGS domain; the sequence is MITITFPDGA…EEDGSIEIIT (61 aa). The interval 242–540 is catalytic; it reads DHRKLGKELD…LIETYKGAFP (299 aa). Zn(2+) is bound by residues cysteine 336, histidine 387, and histidine 517.

Belongs to the class-II aminoacyl-tRNA synthetase family. In terms of assembly, homodimer. Zn(2+) is required as a cofactor.

The protein resides in the cytoplasm. The enzyme catalyses tRNA(Thr) + L-threonine + ATP = L-threonyl-tRNA(Thr) + AMP + diphosphate + H(+). Its function is as follows. Catalyzes the attachment of threonine to tRNA(Thr) in a two-step reaction: L-threonine is first activated by ATP to form Thr-AMP and then transferred to the acceptor end of tRNA(Thr). Also edits incorrectly charged L-seryl-tRNA(Thr). This chain is Threonine--tRNA ligase, found in Streptococcus equi subsp. zooepidemicus (strain H70).